Here is a 707-residue protein sequence, read N- to C-terminus: Potassium-transporting ATPase ATP-binding subunit (707 aa).

Over residues 1-11 (MNTDTQKHEDA) the composition is skewed to basic and acidic residues. The disordered stretch occupies residues 1-37 (MNTDTQKHEDAMSTTTPARAPHDDAPSGQQPGQGRVG). A run of 4 helical transmembrane segments spans residues 61–81 (VMAK…TTAF), 89–109 (WFGW…NLAE), 238–258 (IALN…CATL), and 271–291 (MIVL…ALLS). Aspartate 326 serves as the catalytic 4-aspartylphosphate intermediate. ATP is bound by residues aspartate 363, glutamate 367, 397–404 (FTAQTRMS), and lysine 415. Aspartate 542 and aspartate 546 together coordinate Mg(2+). Transmembrane regions (helical) follow at residues 612–632 (FAII…LNIM), 640–660 (AILS…PLAL), and 683–703 (LGGL…VSLI).

It belongs to the cation transport ATPase (P-type) (TC 3.A.3) family. Type IA subfamily. In terms of assembly, the system is composed of three essential subunits: KdpA, KdpB and KdpC.

Its subcellular location is the cell membrane. It catalyses the reaction K(+)(out) + ATP + H2O = K(+)(in) + ADP + phosphate + H(+). Its function is as follows. Part of the high-affinity ATP-driven potassium transport (or Kdp) system, which catalyzes the hydrolysis of ATP coupled with the electrogenic transport of potassium into the cytoplasm. This subunit is responsible for energy coupling to the transport system and for the release of the potassium ions to the cytoplasm. The protein is Potassium-transporting ATPase ATP-binding subunit of Streptomyces coelicolor (strain ATCC BAA-471 / A3(2) / M145).